The primary structure comprises 462 residues: Bifunctional protein GlmU (462 aa).

Residues 1–239 form a pyrophosphorylase region; that stretch reads MTESVSKPVR…EASVQGVNAQ (239 aa). Residues 17-20, lysine 31, glutamine 84, and 89-90 contribute to the UDP-N-acetyl-alpha-D-glucosamine site; these read LAAG and GT. Aspartate 114 provides a ligand contact to Mg(2+). Glycine 150, glutamate 165, asparagine 180, and asparagine 237 together coordinate UDP-N-acetyl-alpha-D-glucosamine. Mg(2+) is bound at residue asparagine 237. Positions 240–260 are linker; that stretch reads AELAAAEAVWQQNRRKALMVD. Positions 261-462 are N-acetyltransferase; the sequence is GVTMPAPDTV…QKDKKKDKKA (202 aa). 2 residues coordinate UDP-N-acetyl-alpha-D-glucosamine: arginine 326 and lysine 344. The active-site Proton acceptor is the histidine 356. Residues tyrosine 359 and asparagine 370 each contribute to the UDP-N-acetyl-alpha-D-glucosamine site. Residues alanine 373, 379-380, serine 398, serine 416, and arginine 433 contribute to the acetyl-CoA site; that span reads NY.

This sequence in the N-terminal section; belongs to the N-acetylglucosamine-1-phosphate uridyltransferase family. The protein in the C-terminal section; belongs to the transferase hexapeptide repeat family. In terms of assembly, homotrimer. It depends on Mg(2+) as a cofactor.

The protein localises to the cytoplasm. It catalyses the reaction alpha-D-glucosamine 1-phosphate + acetyl-CoA = N-acetyl-alpha-D-glucosamine 1-phosphate + CoA + H(+). The catalysed reaction is N-acetyl-alpha-D-glucosamine 1-phosphate + UTP + H(+) = UDP-N-acetyl-alpha-D-glucosamine + diphosphate. It functions in the pathway nucleotide-sugar biosynthesis; UDP-N-acetyl-alpha-D-glucosamine biosynthesis; N-acetyl-alpha-D-glucosamine 1-phosphate from alpha-D-glucosamine 6-phosphate (route II): step 2/2. It participates in nucleotide-sugar biosynthesis; UDP-N-acetyl-alpha-D-glucosamine biosynthesis; UDP-N-acetyl-alpha-D-glucosamine from N-acetyl-alpha-D-glucosamine 1-phosphate: step 1/1. Its pathway is bacterial outer membrane biogenesis; LPS lipid A biosynthesis. Its function is as follows. Catalyzes the last two sequential reactions in the de novo biosynthetic pathway for UDP-N-acetylglucosamine (UDP-GlcNAc). The C-terminal domain catalyzes the transfer of acetyl group from acetyl coenzyme A to glucosamine-1-phosphate (GlcN-1-P) to produce N-acetylglucosamine-1-phosphate (GlcNAc-1-P), which is converted into UDP-GlcNAc by the transfer of uridine 5-monophosphate (from uridine 5-triphosphate), a reaction catalyzed by the N-terminal domain. This Caulobacter vibrioides (strain ATCC 19089 / CIP 103742 / CB 15) (Caulobacter crescentus) protein is Bifunctional protein GlmU.